We begin with the raw amino-acid sequence, 115 residues long: Large ribosomal subunit protein bL19 (115 aa).

Belongs to the bacterial ribosomal protein bL19 family.

Functionally, this protein is located at the 30S-50S ribosomal subunit interface and may play a role in the structure and function of the aminoacyl-tRNA binding site. This Nitratidesulfovibrio vulgaris (strain DSM 19637 / Miyazaki F) (Desulfovibrio vulgaris) protein is Large ribosomal subunit protein bL19.